Reading from the N-terminus, the 282-residue chain is MHSLFTLNLDLERAGKVICAQSLPFDTARETLLLLSPVGTQCCYMKNAALFLISHFNLIILESDTWLAYANEAGVNPEEGVADFIRQFNAALPEPVRVDALVGYCSSAPLALLAANQGACRTLLLLNGAYFLKDDGVIKSQYERDVERMMQSIPQGNCAQVYEAVSLLHTQSTYTPSDYRYQQVRPLRELSAFRQYLTFLNNLASLELVRIAQAVKTPTLVWCGSQDRYTDTASSRYIAQLLPHSELVEDPDGQHHDFVDGHERLYLTMTRFLTRHKQRAIQ.

Cysteine 105 serves as the catalytic Acyl-thioester intermediate. One can recognise an AB hydrolase-1 domain in the interval 169–261; it reads HTQSTYTPSD…DGQHHDFVDG (93 aa).

The protein belongs to the AB hydrolase superfamily.

The enzyme catalyses holo-[CmaD peptidyl-carrier protein] + L-alloisoleucyl-[CmaA peptidyl-carrier protein] = L-alloisoleucyl-[CmaD peptidyl-carrier protein] + holo-[CmaA peptidyl-carrier protein]. Functionally, involved in the biosynthesis of the phytotoxin coronatine (COR). Catalyzes the transfer of the aminoacyl group covalently attached to the pantetheinyl arm of CmaA to the holo-pantetheinyl arm of CmaD. During the shuttling process, CmaE generates a covalent-aminoacyl-S-Cys enzyme intermediate by the action of its donor substrate L-aminoacyl-S-CmaA and delivers it to the sulfhydryl group attached to the phosphopantetheinyl arm on CmaD. The chain is L-allo-isoleucyltransferase from Pseudomonas savastanoi pv. glycinea (Pseudomonas syringae pv. glycinea).